The primary structure comprises 310 residues: tRNA dimethylallyltransferase (310 aa).

11-18 (GPTAVGKT) contributes to the ATP binding site. 13–18 (TAVGKT) contributes to the substrate binding site. An interaction with substrate tRNA region spans residues 36–39 (DSMQ).

It belongs to the IPP transferase family. In terms of assembly, monomer. Mg(2+) is required as a cofactor.

It catalyses the reaction adenosine(37) in tRNA + dimethylallyl diphosphate = N(6)-dimethylallyladenosine(37) in tRNA + diphosphate. Functionally, catalyzes the transfer of a dimethylallyl group onto the adenine at position 37 in tRNAs that read codons beginning with uridine, leading to the formation of N6-(dimethylallyl)adenosine (i(6)A). The sequence is that of tRNA dimethylallyltransferase from Shouchella clausii (strain KSM-K16) (Alkalihalobacillus clausii).